Reading from the N-terminus, the 375-residue chain is Erythronate-4-phosphate dehydrogenase (375 aa).

Residues S45 and T66 each contribute to the substrate site. Residues D146 and T175 each contribute to the NAD(+) site. The active site involves R208. Residue D232 coordinates NAD(+). The active site involves E237. H254 (proton donor) is an active-site residue. An NAD(+)-binding site is contributed by G257. Y258 is a substrate binding site.

This sequence belongs to the D-isomer specific 2-hydroxyacid dehydrogenase family. PdxB subfamily. In terms of assembly, homodimer.

The protein localises to the cytoplasm. The enzyme catalyses 4-phospho-D-erythronate + NAD(+) = (R)-3-hydroxy-2-oxo-4-phosphooxybutanoate + NADH + H(+). Its pathway is cofactor biosynthesis; pyridoxine 5'-phosphate biosynthesis; pyridoxine 5'-phosphate from D-erythrose 4-phosphate: step 2/5. Catalyzes the oxidation of erythronate-4-phosphate to 3-hydroxy-2-oxo-4-phosphonooxybutanoate. The sequence is that of Erythronate-4-phosphate dehydrogenase from Yersinia enterocolitica serotype O:8 / biotype 1B (strain NCTC 13174 / 8081).